We begin with the raw amino-acid sequence, 65 residues long: Putative per-hexamer repeat protein 2 (65 aa).

The chain is Putative per-hexamer repeat protein 2 (Phxr2) from Mus musculus (Mouse).